Reading from the N-terminus, the 336-residue chain is UDP-galactose transporter 1 (336 aa).

9 helical membrane-spanning segments follow: residues Leu11–Phe31, Phe38–Ile58, Phe83–Phe103, Ile131–Ser151, Met154–Ala174, Ala193–Leu213, Ile227–Ile247, Thr254–Phe274, and Ile278–Tyr298.

Belongs to the TPT transporter family. TPT (TC 2.A.7.9) subfamily.

The protein localises to the membrane. Its function is as follows. Nucleotide sugar transporter that specifically transports UDP-galactose. This Arabidopsis thaliana (Mouse-ear cress) protein is UDP-galactose transporter 1.